A 352-amino-acid polypeptide reads, in one-letter code: Photosystem II D2 protein (352 aa).

Thr2 is modified (N-acetylthreonine). Position 2 is a phosphothreonine (Thr2). A helical transmembrane segment spans residues Cys40–Thr60. Residue His117 participates in chlorophyll a binding. The chain crosses the membrane as a helical span at residues Gly124–Pro140. Gln129 and Asn142 together coordinate pheophytin a. A helical transmembrane segment spans residues Val152–Ser165. His197 contributes to the chlorophyll a binding site. A helical transmembrane segment spans residues Ala207–Asp227. A plastoquinone contacts are provided by His214 and Phe261. Residue His214 participates in Fe cation binding. Residue His268 coordinates Fe cation. A helical membrane pass occupies residues Gly278 to Arg294.

The protein belongs to the reaction center PufL/M/PsbA/D family. As to quaternary structure, PSII is composed of 1 copy each of membrane proteins PsbA, PsbB, PsbC, PsbD, PsbE, PsbF, PsbH, PsbI, PsbJ, PsbK, PsbL, PsbM, PsbT, PsbX, PsbY, PsbZ, Psb30/Ycf12, at least 3 peripheral proteins of the oxygen-evolving complex and a large number of cofactors. It forms dimeric complexes. The D1/D2 heterodimer binds P680, chlorophylls that are the primary electron donor of PSII, and subsequent electron acceptors. It shares a non-heme iron and each subunit binds pheophytin, quinone, additional chlorophylls, carotenoids and lipids. There is also a Cl(-1) ion associated with D1 and D2, which is required for oxygen evolution. The PSII complex binds additional chlorophylls, carotenoids and specific lipids. serves as cofactor.

It localises to the plastid. The protein localises to the chloroplast thylakoid membrane. The enzyme catalyses 2 a plastoquinone + 4 hnu + 2 H2O = 2 a plastoquinol + O2. Photosystem II (PSII) is a light-driven water:plastoquinone oxidoreductase that uses light energy to abstract electrons from H(2)O, generating O(2) and a proton gradient subsequently used for ATP formation. It consists of a core antenna complex that captures photons, and an electron transfer chain that converts photonic excitation into a charge separation. The D1/D2 (PsbA/PsbD) reaction center heterodimer binds P680, the primary electron donor of PSII as well as several subsequent electron acceptors. D2 is needed for assembly of a stable PSII complex. This is Photosystem II D2 protein from Nephroselmis olivacea (Green alga).